Consider the following 252-residue polypeptide: MLKYLIFLAILISVVHSNGYMTIRLKSAFPLNVTVEVAEEVYFPTNKRSFNLQLKPNRVGFVSNIPVKFGRPGLVLVDCSPVEKFQIHRVTLRSIRWNTHVRSVASDNIFLPFTGFRYDIKCNRYWHGLHCDHFCNDDFARTINRRCTQNGTLGCLEGFHGPNCELPVPADSCKCQNGGKCVSSLENTWAQNGSLICECRLGHFEGKHCEKKSFNYFPKIEATTYATKDSHLARQFYNNSRVPNELATLPRL.

The first 17 residues, 1-17 (MLKYLIFLAILISVVHS), serve as a signal peptide directing secretion. The DSL domain occupies 120–164 (IKCNRYWHGLHCDHFCNDDFARTINRRCTQNGTLGCLEGFHGPNC). 6 disulfide bridges follow: C122–C131, C135–C147, C155–C164, C173–C181, C175–C197, and C199–C209. An EGF-like domain is found at 169-210 (PADSCKCQNGGKCVSSLENTWAQNGSLICECRLGHFEGKHCE).

As to quaternary structure, may interact with lin-12/Notch receptor.

The protein resides in the secreted. Functionally, probable secreted Notch ligand involved in the mediation of Notch signaling. Involved in the lin-12/Notch pathway-mediated signaling of cell fate in vulval precursor cells (VPCs), acting redundantly with lag-2, apx-1 and osm-11. May also be involved in glp-1/Notch signaling. The polypeptide is Delta-like protein dsl-1 (Caenorhabditis elegans).